Reading from the N-terminus, the 110-residue chain is Secreted Ly-6/uPAR-related protein 1 (110 aa).

The signal sequence occupies residues 1-22 (MTLRWAMWLLLLAAWSMGYGEA). A UPAR/Ly6 domain is found at 24–73 (RCYTCEQPTAINSCKNIAQCKMEDTACKTVLETVEAAFPFNHSPMVTRSC). Disulfide bonds link C25–C50, C28–C37, C43–C73, C77–C93, and C94–C99.

As to quaternary structure, homodimer. Interacts with PLAU. Interacts with CHRNA7. Expressed in skin, eye, whole lung, trachea, esophagus and stomach. Widely expressed in various tissues including spleen and thymus but not pancreas. Expressed in macrophages, dendritic cells, T and B cells. Expressed in lung specifically in ciliated bronchial epithelial cells (at protein level). Expression is decreased in lungs of asthmatic model mice. Expressed in the cornea.

It is found in the secreted. Functionally, has an antitumor activity. Was found to be a marker of late differentiation of the skin. Implicated in maintaining the physiological and structural integrity of the keratinocyte layers of the skin. In vitro down-regulates keratinocyte proliferation; the function may involve the proposed role as modulator of nicotinic acetylcholine receptors (nAChRs) activity. In vitro inhibits alpha-7-dependent nAChR currents in an allosteric manner. In T cells may be involved in regulation of intracellular Ca(2+) signaling. Seems to have a immunomodulatory function in the cornea. The function may implicate a possible role as a scavenger receptor for PLAU thereby blocking PLAU-dependent functions of PLAUR such as in cell migration and proliferation. In Mus musculus (Mouse), this protein is Secreted Ly-6/uPAR-related protein 1 (Slurp1).